Reading from the N-terminus, the 322-residue chain is Rhomboid-like protein 16, chloroplastic (322 aa).

Residues 1 to 52 constitute a chloroplast transit peptide; the sequence is MHAIFCRRVAVGCSSPQLTKLVTKQASQSRHSLSHLLPFDLSSRFVPPYVVS. Transmembrane regions (helical) follow at residues 110–130, 166–186, 201–221, 238–258, 265–285, and 295–315; these read WINGANGVVFGLVIANAAVFT, FSHVGATHIILNMMGLCYFGA, YFAGALGGSVFFLSSHALSVI, IGKLGANGPVYAITLLDMLLY, FGLMLRVPVFAGIYSLGLNII, and TLTSLDQLGGVVVAVIAWARI.

It belongs to the peptidase S54 family.

Its subcellular location is the plastid. The protein resides in the chloroplast membrane. Rhomboid-type serine protease that catalyzes intramembrane proteolysis. May cleave the plastid translocon component Tic40. The sequence is that of Rhomboid-like protein 16, chloroplastic from Arabidopsis thaliana (Mouse-ear cress).